Consider the following 345-residue polypeptide: Dihydroorotase (345 aa).

Zn(2+) is bound by residues His13 and His15. Residues 15–17 (HLR) and Asn41 contribute to the substrate site. Zn(2+)-binding residues include Lys100, His137, and His175. Lys100 carries the post-translational modification N6-carboxylysine. His137 lines the substrate pocket. Leu220 lines the substrate pocket. Asp248 contacts Zn(2+). Asp248 is a catalytic residue. Substrate is bound by residues His252 and Ala264.

It belongs to the metallo-dependent hydrolases superfamily. DHOase family. Class II DHOase subfamily. In terms of assembly, homodimer. It depends on Zn(2+) as a cofactor.

The catalysed reaction is (S)-dihydroorotate + H2O = N-carbamoyl-L-aspartate + H(+). It functions in the pathway pyrimidine metabolism; UMP biosynthesis via de novo pathway; (S)-dihydroorotate from bicarbonate: step 3/3. Functionally, catalyzes the reversible cyclization of carbamoyl aspartate to dihydroorotate. This Laribacter hongkongensis (strain HLHK9) protein is Dihydroorotase.